We begin with the raw amino-acid sequence, 128 residues long: Small ribosomal subunit protein uS9 (128 aa).

The protein belongs to the universal ribosomal protein uS9 family.

The polypeptide is Small ribosomal subunit protein uS9 (Cytophaga hutchinsonii (strain ATCC 33406 / DSM 1761 / CIP 103989 / NBRC 15051 / NCIMB 9469 / D465)).